A 355-amino-acid chain; its full sequence is Chemerin-like receptor 2 (355 aa).

At 1–41 (MEDLEETLFEEFENYSYDLDYYSLESDLEEKVQLGVVHWVS) the chain is on the extracellular side. N14 carries an N-linked (GlcNAc...) asparagine glycan. The helical transmembrane segment at 42 to 62 (LVLYCLAFVLGIPGNAIVIWF) threads the bilayer. Residues 63-73 (TGFKWKKTVTT) lie on the Cytoplasmic side of the membrane. The helical transmembrane segment at 74 to 94 (LWFLNLAIADFIFLLFLPLYI) threads the bilayer. Residues 95–112 (SYVAMNFHWPFGIWLCKA) are Extracellular-facing. An intrachain disulfide couples C110 to C187. A helical membrane pass occupies residues 113–133 (NSFTAQLNMFASVFFLTVISL). The Cytoplasmic portion of the chain corresponds to 134-154 (DHYIHLIHPVLSHRHRTLKNS). The helical transmembrane segment at 155–175 (LIVIIFIWLLASLIGGPALYF) threads the bilayer. The Extracellular segment spans residues 176–210 (RDTVEFNNHTLCYNNFQKHDPDLTLIRHHVLTWVK). Residues 211-231 (FIIGYLFPLLTMSICYLCLIF) form a helical membrane-spanning segment. At 232-247 (KVKKRSILISSRHFWT) the chain is on the cytoplasmic side. The helical transmembrane segment at 248 to 268 (ILVVVVAFVVCWTPYHLFSIW) threads the bilayer. Topologically, residues 269–286 (ELTIHHNSYSHHVMQAGI) are extracellular. A helical membrane pass occupies residues 287-307 (PLSTGLAFLNSCLNPILYVLI). Over 308–355 (SKKFQARFRSSVAEILKYTLWEVSCSGTVSEQLRNSETKNLCLLETAQ) the chain is Cytoplasmic.

Belongs to the chemokine-like receptor (CMKLR) family. In terms of tissue distribution, expressed in hippocampus.

Its subcellular location is the cell membrane. Functionally, receptor for chemoattractant adipokine chemerin/RARRES2 suggesting a role for this receptor in the regulation of inflammation and energy homesotasis. Signals mainly via beta-arrestin pathway. Binding of RARRES2 activates weakly G proteins, calcium mobilization and MAPK1/MAPK3 (ERK1/2) phosphorylation too. Also acts as a receptor for TAFA1, mediates its effects on neuronal stem-cell proliferation and differentiation via the activation of ROCK/ERK and ROCK/STAT3 signaling pathway. In terms of biological role, (Microbial infection) Coreceptor for HIV-1. In Homo sapiens (Human), this protein is Chemerin-like receptor 2.